The chain runs to 1043 residues: Sucrose-phosphate synthase 1 (1043 aa).

A compositionally biased stretch (basic and acidic residues) spans 95-117 (EEKEAQRLAKRRLEREKGRREAT). Residues 95-127 (EEKEAQRLAKRRLEREKGRREATADMSEEFSEG) are disordered. A phosphoserine mark is found at Ser121, Ser125, Ser152, and Ser155. Positions 670–693 (PRHPQWQSDDGGDNSEPESPSDSL) are disordered.

The protein belongs to the glycosyltransferase 1 family. In terms of assembly, homodimer or homotetramer. In terms of processing, phosphorylated at Ser-152 upon sucrose supply. In terms of tissue distribution, expressed in seeds, stems, rosette leaves, flowers and siliques. Highly expressed in maturing nectaries.

The catalysed reaction is beta-D-fructose 6-phosphate + UDP-alpha-D-glucose = sucrose 6(F)-phosphate + UDP + H(+). The protein operates within glycan biosynthesis; sucrose biosynthesis; sucrose from D-fructose 6-phosphate and UDP-alpha-D-glucose: step 1/2. Its activity is regulated as follows. Activity is regulated by phosphorylation and moderated by concentration of metabolites and light. In terms of biological role, plays a major role in photosynthetic sucrose synthesis by catalyzing the rate-limiting step of sucrose biosynthesis from UDP-glucose and fructose- 6-phosphate. Involved in the regulation of carbon partitioning in the leaves of plants. May regulate the synthesis of sucrose and therefore play a major role as a limiting factor in the export of photoassimilates out of the leaf. Plays a role for sucrose availability that is essential for plant growth and fiber elongation. Required for nectar secretion. The protein is Sucrose-phosphate synthase 1 (SPS1) of Arabidopsis thaliana (Mouse-ear cress).